The following is a 444-amino-acid chain: Crh-like protein 3 (444 aa).

The first 19 residues, Met-1–Ala-19, serve as a signal peptide directing secretion. Cysteines 27 and 34 form a disulfide. Residues Ser-57–Ser-271 form the GH16 domain. The active-site Nucleophile is the Glu-157. Glu-161 serves as the catalytic Proton donor. Glu-161 serves as a coordination point for chitin. Asn-187 and Asn-228 each carry an N-linked (GlcNAc...) asparagine glycan. Chitin is bound by residues Trp-248 and Thr-259. 4 N-linked (GlcNAc...) asparagine glycosylation sites follow: Asn-315, Asn-323, Asn-336, and Asn-371. Ser-415 carries GPI-anchor amidated serine lipidation. The propeptide at Ala-416–Leu-444 is removed in mature form.

This sequence belongs to the glycosyl hydrolase 16 family. CRH1 subfamily. In terms of assembly, forms homodimers as well as heterodimers with other crh protein members crh1 and crh2. Dimerization may be necessary for the transglycosylation activity.

Its subcellular location is the cell membrane. The catalysed reaction is Random endo-hydrolysis of N-acetyl-beta-D-glucosaminide (1-&gt;4)-beta-linkages in chitin and chitodextrins.. In terms of biological role, dual chitinase/transglycosylase that plays a role in cell wall architecture. Chitinase and transglycosylase activities are coupled. Required for the polysaccharide cross-linking at the septa and the cell wall. More specifically, transfers chitin to 1,6-beta-glucan in the cell wall. The chain is Crh-like protein 3 from Botryotinia fuckeliana (strain B05.10) (Noble rot fungus).